Reading from the N-terminus, the 83-residue chain is Exodeoxyribonuclease 7 small subunit (83 aa).

The protein belongs to the XseB family. Heterooligomer composed of large and small subunits.

It is found in the cytoplasm. The catalysed reaction is Exonucleolytic cleavage in either 5'- to 3'- or 3'- to 5'-direction to yield nucleoside 5'-phosphates.. In terms of biological role, bidirectionally degrades single-stranded DNA into large acid-insoluble oligonucleotides, which are then degraded further into small acid-soluble oligonucleotides. In Rhizobium leguminosarum bv. trifolii (strain WSM2304), this protein is Exodeoxyribonuclease 7 small subunit.